Reading from the N-terminus, the 756-residue chain is Amine oxidase [copper-containing] 2 (756 aa).

Residues 1 to 4 (MHLK) are Cytoplasmic-facing. The helical transmembrane segment at 5 to 25 (IVLAFLALSLITIFALAYVLL) threads the bilayer. At 26 to 756 (TSPGGSSQPP…DLPPFSYHGF (731 aa)) the chain is on the extracellular side. N-linked (GlcNAc...) asparagine glycans are attached at residues asparagine 133, asparagine 198, and asparagine 226. Aspartate 380 serves as the catalytic Proton acceptor. The cysteines at positions 398 and 424 are disulfide-linked. The active-site Schiff-base intermediate with substrate; via topaquinone is tyrosine 465. 2',4',5'-topaquinone is present on tyrosine 465. Residues histidine 516 and histidine 518 each coordinate Cu(2+). 7 residues coordinate Ca(2+): aspartate 525, leucine 526, aspartate 527, glutamate 568, glutamate 637, phenylalanine 659, and asparagine 661. Residue asparagine 662 is glycosylated (N-linked (GlcNAc...) asparagine). Positions 663, 669, and 670 each coordinate Ca(2+). A Cu(2+)-binding site is contributed by histidine 680. Cysteines 730 and 737 form a disulfide.

It belongs to the copper/topaquinone oxidase family. In terms of assembly, homodimer; disulfide-linked. Probably forms heterodimers with AOC3. Requires Cu(2+) as cofactor. Ca(2+) is required as a cofactor. It depends on L-topaquinone as a cofactor. Topaquinone (TPQ) is generated by copper-dependent autoxidation of a specific tyrosyl residue. In terms of tissue distribution, expressed in many tissues including adipocytes with higher expression in retina where it is active. As to expression, not expressed in testis. Not expressed in thymus.

It localises to the cell membrane. Its subcellular location is the cytoplasm. It carries out the reaction 2-phenylethylamine + O2 + H2O = 2-phenylacetaldehyde + H2O2 + NH4(+). It catalyses the reaction tryptamine + O2 + H2O = indole-3-acetaldehyde + H2O2 + NH4(+). The enzyme catalyses tyramine + O2 + H2O = (4-hydroxyphenyl)acetaldehyde + H2O2 + NH4(+). Its function is as follows. Catalyzes the oxidative deamination of primary amines to the corresponding aldehydes with the concomitant production of hydrogen peroxide and ammonia. Has a preference for 2-phenylethylamine, tryptamine and tyramine. Could also act on methylamine and benzylamine but much less efficiently. The chain is Amine oxidase [copper-containing] 2 from Homo sapiens (Human).